We begin with the raw amino-acid sequence, 52 residues long: Large ribosomal subunit protein bL32c (52 aa).

Belongs to the bacterial ribosomal protein bL32 family.

It localises to the plastid. The protein resides in the chloroplast. This Lobularia maritima (Sweet alyssum) protein is Large ribosomal subunit protein bL32c.